We begin with the raw amino-acid sequence, 290 residues long: 4-diphosphocytidyl-2-C-methyl-D-erythritol kinase (290 aa).

Residue Lys13 is part of the active site. Pro93–Ala103 serves as a coordination point for ATP. Asp135 is a catalytic residue.

Belongs to the GHMP kinase family. IspE subfamily.

The enzyme catalyses 4-CDP-2-C-methyl-D-erythritol + ATP = 4-CDP-2-C-methyl-D-erythritol 2-phosphate + ADP + H(+). It functions in the pathway isoprenoid biosynthesis; isopentenyl diphosphate biosynthesis via DXP pathway; isopentenyl diphosphate from 1-deoxy-D-xylulose 5-phosphate: step 3/6. Functionally, catalyzes the phosphorylation of the position 2 hydroxy group of 4-diphosphocytidyl-2C-methyl-D-erythritol. This chain is 4-diphosphocytidyl-2-C-methyl-D-erythritol kinase, found in Desulfitobacterium hafniense (strain Y51).